The sequence spans 280 residues: Bifunctional protein FolD (280 aa).

Residues 158-160 (GES), I183, and I222 contribute to the NADP(+) site.

This sequence belongs to the tetrahydrofolate dehydrogenase/cyclohydrolase family. Homodimer.

It catalyses the reaction (6R)-5,10-methylene-5,6,7,8-tetrahydrofolate + NADP(+) = (6R)-5,10-methenyltetrahydrofolate + NADPH. The enzyme catalyses (6R)-5,10-methenyltetrahydrofolate + H2O = (6R)-10-formyltetrahydrofolate + H(+). It functions in the pathway one-carbon metabolism; tetrahydrofolate interconversion. Catalyzes the oxidation of 5,10-methylenetetrahydrofolate to 5,10-methenyltetrahydrofolate and then the hydrolysis of 5,10-methenyltetrahydrofolate to 10-formyltetrahydrofolate. In Mycoplasma mobile (strain ATCC 43663 / 163K / NCTC 11711) (Mesomycoplasma mobile), this protein is Bifunctional protein FolD.